Consider the following 35-residue polypeptide: U2-agatoxin-Aop1a (35 aa).

3 disulfide bridges follow: Cys3-Cys19, Cys10-Cys24, and Cys18-Cys34. Position 35 is a leucine amide (Leu35).

Belongs to the neurotoxin 01 (U2-agtx) family. As to expression, expressed by the venom gland.

The protein resides in the secreted. Functionally, insect-selective toxin causing rapid but reversible paralysis in crickets. Suppresses the excitatory postsynaptic potentials evoked in lobster neuromuscular synaptic preparations, possibly by blocking the presynaptic calcium channel (Cav). Induces instantaneous reversible paralysis when injected into crickets. The sequence is that of U2-agatoxin-Aop1a from Allagelena opulenta (Funnel weaving spider).